Consider the following 210-residue polypeptide: Small ribosomal subunit protein uS3 (210 aa).

The 70-residue stretch at 17–86 (IDEFLEKELR…NPQIDVQEIK (70 aa)) folds into the KH type-2 domain.

It belongs to the universal ribosomal protein uS3 family. Part of the 30S ribosomal subunit.

Binds the lower part of the 30S subunit head. The protein is Small ribosomal subunit protein uS3 of Pyrococcus abyssi (strain GE5 / Orsay).